The chain runs to 271 residues: ATP synthase subunit a (271 aa).

5 helical membrane-spanning segments follow: residues 40–60 (TINI…LVLF), 100–120 (LIAP…LMDL), 146–166 (DVNV…FYSI), 220–240 (LIFI…LNVP), and 242–262 (AIFH…LTIV).

Belongs to the ATPase A chain family. F-type ATPases have 2 components, CF(1) - the catalytic core - and CF(0) - the membrane proton channel. CF(1) has five subunits: alpha(3), beta(3), gamma(1), delta(1), epsilon(1). CF(0) has three main subunits: a(1), b(2) and c(9-12). The alpha and beta chains form an alternating ring which encloses part of the gamma chain. CF(1) is attached to CF(0) by a central stalk formed by the gamma and epsilon chains, while a peripheral stalk is formed by the delta and b chains.

The protein localises to the cell inner membrane. In terms of biological role, key component of the proton channel; it plays a direct role in the translocation of protons across the membrane. The chain is ATP synthase subunit a from Escherichia coli O8 (strain IAI1).